The following is a 138-amino-acid chain: Nucleoside diphosphate kinase (138 aa).

Positions 9, 57, 85, 91, 102, and 112 each coordinate ATP. His115 serves as the catalytic Pros-phosphohistidine intermediate.

This sequence belongs to the NDK family. In terms of assembly, homotetramer. It depends on Mg(2+) as a cofactor.

Its subcellular location is the cytoplasm. It catalyses the reaction a 2'-deoxyribonucleoside 5'-diphosphate + ATP = a 2'-deoxyribonucleoside 5'-triphosphate + ADP. It carries out the reaction a ribonucleoside 5'-diphosphate + ATP = a ribonucleoside 5'-triphosphate + ADP. Its function is as follows. Major role in the synthesis of nucleoside triphosphates other than ATP. The ATP gamma phosphate is transferred to the NDP beta phosphate via a ping-pong mechanism, using a phosphorylated active-site intermediate. The protein is Nucleoside diphosphate kinase of Deinococcus geothermalis (strain DSM 11300 / CIP 105573 / AG-3a).